Reading from the N-terminus, the 265-residue chain is Small ribosomal subunit protein uS3 (265 aa).

The KH type-2 domain occupies 39–111 (IREFLNENFS…EVILNIIEVR (73 aa)). The interval 224 to 250 (FEAGNQRRGQKRRPRNDQPVKDLNKEK) is disordered. A compositionally biased stretch (basic and acidic residues) spans 238–250 (RNDQPVKDLNKEK).

Belongs to the universal ribosomal protein uS3 family. Part of the 30S ribosomal subunit. Forms a tight complex with proteins S10 and S14.

Functionally, binds the lower part of the 30S subunit head. Binds mRNA in the 70S ribosome, positioning it for translation. This chain is Small ribosomal subunit protein uS3, found in Acholeplasma laidlawii.